We begin with the raw amino-acid sequence, 81 residues long: MYSRVLSVAAIVTMALAVQAANSTAPYGNTTNSTGTTNGTNGTNTTTSSTATQSSAASITNFSSGAFVIAMIAVACSVMSL.

A mitochondrion-targeting transit peptide spans 1–20; sequence MYSRVLSVAAIVTMALAVQA. A disordered region spans residues 27-53; the sequence is YGNTTNSTGTTNGTNGTNTTTSSTATQ. The span at 28 to 53 shows a compositional bias: low complexity; the sequence is GNTTNSTGTTNGTNGTNTTTSSTATQ. A helical membrane pass occupies residues 59-79; sequence ITNFSSGAFVIAMIAVACSVM.

The protein resides in the mitochondrion membrane. This is an uncharacterized protein from Schizosaccharomyces pombe (strain 972 / ATCC 24843) (Fission yeast).